The following is a 161-amino-acid chain: UPF0225 protein NTHI0386 (161 aa).

The protein belongs to the UPF0225 family.

In Haemophilus influenzae (strain 86-028NP), this protein is UPF0225 protein NTHI0386.